A 75-amino-acid polypeptide reads, in one-letter code: Acyl carrier protein (75 aa).

The region spanning 1–75 (MSVFDKVKSI…DAVNYIKENQ (75 aa)) is the Carrier domain. S35 is subject to O-(pantetheine 4'-phosphoryl)serine.

It belongs to the acyl carrier protein (ACP) family. Post-translationally, 4'-phosphopantetheine is transferred from CoA to a specific serine of apo-ACP by AcpS. This modification is essential for activity because fatty acids are bound in thioester linkage to the sulfhydryl of the prosthetic group.

Its subcellular location is the cytoplasm. It functions in the pathway lipid metabolism; fatty acid biosynthesis. Its function is as follows. Carrier of the growing fatty acid chain in fatty acid biosynthesis. This Desulfitobacterium hafniense (strain Y51) protein is Acyl carrier protein.